A 610-amino-acid chain; its full sequence is UvrABC system protein C (610 aa).

The region spanning 16–94 (SQPGVYRMYD…IKLYQPRYNV (79 aa)) is the GIY-YIG domain. The 36-residue stretch at 204–239 (DQVLTQLISRMETASQNLEFEEAARIRDQIQAVRRV) folds into the UVR domain.

This sequence belongs to the UvrC family. In terms of assembly, interacts with UvrB in an incision complex.

It is found in the cytoplasm. The UvrABC repair system catalyzes the recognition and processing of DNA lesions. UvrC both incises the 5' and 3' sides of the lesion. The N-terminal half is responsible for the 3' incision and the C-terminal half is responsible for the 5' incision. This chain is UvrABC system protein C, found in Escherichia coli O45:K1 (strain S88 / ExPEC).